The primary structure comprises 331 residues: Eukaryotic translation initiation factor 2 subunit 2 (331 aa).

Disordered regions lie at residues 1 to 75 (MSGD…DLNF) and 97 to 120 (AIKDVKIESDAQEPAEPEDDLDIM). The residue at position 2 (S2) is an N-acetylserine. Residues S2 and S13 each carry the phosphoserine modification. Residues 13–22 (SKKKKKKKKP) are compositionally biased toward basic residues. T36 carries the post-translational modification Phosphothreonine. The span at 40–51 (ETKEVEPEPTEE) shows a compositional bias: basic and acidic residues. S67 carries the post-translational modification Phosphoserine. Residue K102 forms a Glycyl lysine isopeptide (Lys-Gly) (interchain with G-Cter in SUMO2) linkage. The residue at position 105 (S105) is a Phosphoserine. Positions 106–118 (DAQEPAEPEDDLD) are enriched in acidic residues. Residues S158 and S216 each carry the phosphoserine modification. 2 positions are modified to N6-acetyllysine: K263 and K291. The C4-type zinc-finger motif lies at 279–303 (CHTCRSPDTILQKDTRLYFLQCETC).

Belongs to the eIF-2-beta/eIF-5 family. As to quaternary structure, eukaryotic translation initiation factor 2 eIF2 is a heterotrimeric complex composed of an alpha (EIF2S1), a beta (EIF2S2) and a gamma (EIF2S3) chain. eIF2 is member of the 43S pre-initiation complex (43S PIC). eIF2 forms a complex with at least CELF1/CUGBP1, CALR, CALR3, EIF2S1, EIF2S2, HSP90B1 and HSPA5. Interacts with BZW2/5MP1. Interacts with EIF5.

The protein resides in the cytoplasm. The protein localises to the cytosol. In terms of biological role, component of the eIF2 complex that functions in the early steps of protein synthesis by forming a ternary complex with GTP and initiator tRNA. This complex binds to a 40S ribosomal subunit, followed by mRNA binding to form the 43S pre-initiation complex (43S PIC). Junction of the 60S ribosomal subunit to form the 80S initiation complex is preceded by hydrolysis of the GTP bound to eIF2 and release of an eIF2-GDP binary complex. In order for eIF2 to recycle and catalyze another round of initiation, the GDP bound to eIF2 must exchange with GTP by way of a reaction catalyzed by eIF2B. The sequence is that of Eukaryotic translation initiation factor 2 subunit 2 (Eif2s2) from Mus musculus (Mouse).